Reading from the N-terminus, the 417-residue chain is MKFANLTAKEFSDFTDRMTYSHFTQMEGNYELKVAEGTESHLVGIKNNDNEVIAACLLTAVPVMKIFKYFYSNRGPVIDYNNKELVHFFFNELSKYVKKYNCLYLRVDPYLPYQYLNHEGEITGNAGHDWIFDELESLGYKHEGFHKGFDPVLQIRYHSVLNLANKSANDVLKNMDGLRKRNTKKVKKNGVKVRFLSEEELPIFRSFMEDTSETKDFADREDSFYYNRFKHYKGRVLVPLAYINFDEYIEELNNERNVLNKDYNKALKDIEKRPENKKAHNKKENLEQQLDANQQKINEAKNLKQEHGNELPISAGFFIINPFEVVYYAGGTSNRYRHFAGSYAVQWKMINYAIEHGINRYNFYGISGDFSEDAEDAGVVKFKKGYDADVIEYVGDFIKPINKPMYNIYRTLKKLKK.

It belongs to the FemABX family.

The protein resides in the cytoplasm. It carries out the reaction beta-D-GlcNAc-(1-&gt;4)-Mur2Ac(oyl-L-Ala-D-isoglutaminyl-L-Lys-(N(6)-Gly)-D-Ala-D-Ala)-di-trans,octa-cis-undecaprenyl diphosphate + 2 glycyl-tRNA(Gly) = MurNAc-L-Ala-D-isoglutaminyl-L-Lys-(N(6)-tri-Gly)-D-Ala-D-Ala-diphospho-di-trans,octa-cis-undecaprenyl-GlcNAc + 2 tRNA(Gly) + 2 H(+). Catalyzes the incorporation of amino acid(s) into the interchain peptide bridge of peptidoglycan, using aminoacyl-tRNA as amino acid donor. The protein is Aminoacyltransferase FemA (femA) of Staphylococcus epidermidis.